The following is a 496-amino-acid chain: Probable cytosol aminopeptidase (496 aa).

Positions 266 and 271 each coordinate Mn(2+). The active site involves lysine 278. Positions 289, 348, and 350 each coordinate Mn(2+). Arginine 352 is a catalytic residue.

This sequence belongs to the peptidase M17 family. Requires Mn(2+) as cofactor.

The protein resides in the cytoplasm. The enzyme catalyses Release of an N-terminal amino acid, Xaa-|-Yaa-, in which Xaa is preferably Leu, but may be other amino acids including Pro although not Arg or Lys, and Yaa may be Pro. Amino acid amides and methyl esters are also readily hydrolyzed, but rates on arylamides are exceedingly low.. It catalyses the reaction Release of an N-terminal amino acid, preferentially leucine, but not glutamic or aspartic acids.. Functionally, presumably involved in the processing and regular turnover of intracellular proteins. Catalyzes the removal of unsubstituted N-terminal amino acids from various peptides. This is Probable cytosol aminopeptidase from Pseudomonas fluorescens (strain SBW25).